Reading from the N-terminus, the 646-residue chain is Acetyl-coenzyme A synthetase (646 aa).

Residues 189–192 (RGPK), threonine 307, and asparagine 331 each bind CoA. Residues 383-385 (GEP), 407-412 (DTWWQT), aspartate 496, and arginine 511 contribute to the ATP site. CoA is bound at residue serine 519. Residue arginine 522 participates in ATP binding. The Mg(2+) site is built by valine 533, histidine 535, and valine 538. A CoA-binding site is contributed by arginine 580. An N6-acetyllysine modification is found at lysine 605.

Belongs to the ATP-dependent AMP-binding enzyme family. The cofactor is Mg(2+). Post-translationally, acetylated. Deacetylation by the SIR2-homolog deacetylase activates the enzyme.

It carries out the reaction acetate + ATP + CoA = acetyl-CoA + AMP + diphosphate. Catalyzes the conversion of acetate into acetyl-CoA (AcCoA), an essential intermediate at the junction of anabolic and catabolic pathways. AcsA undergoes a two-step reaction. In the first half reaction, AcsA combines acetate with ATP to form acetyl-adenylate (AcAMP) intermediate. In the second half reaction, it can then transfer the acetyl group from AcAMP to the sulfhydryl group of CoA, forming the product AcCoA. The polypeptide is Acetyl-coenzyme A synthetase (Desulfatibacillum aliphaticivorans).